The following is a 255-amino-acid chain: GTP cyclohydrolase III 1 (255 aa).

The protein belongs to the archaeal-type GTP cyclohydrolase family.

It carries out the reaction GTP + 3 H2O = 2-amino-5-formylamino-6-(5-phospho-D-ribosylamino)pyrimidin-4(3H)-one + 2 phosphate + 2 H(+). Catalyzes the formation of 2-amino-5-formylamino-6-ribofuranosylamino-4(3H)-pyrimidinone ribonucleotide monophosphate and inorganic phosphate from GTP. Also has an independent pyrophosphate phosphohydrolase activity. This Halobacterium salinarum (strain ATCC 700922 / JCM 11081 / NRC-1) (Halobacterium halobium) protein is GTP cyclohydrolase III 1 (gch31).